We begin with the raw amino-acid sequence, 210 residues long: MVNYTVKNWQGEEAGTGTLELKTAKPETAKHLIHRVVVSHLAAARQGNASSKTRSEVRGGGRKPWRQKGTGRARAGSIRSPLWRGGGVIFGPKPRDFEVKVNRKEKRLALRTALISQADNFIVVESFAEQFSQPKTKELTAALSRWGASPEEKILLILTEIPENVYLSGRNICNLKIIRADSLNVYDVILADRVIATAAALAKIEEVYGA.

The tract at residues 44–77 (ARQGNASSKTRSEVRGGGRKPWRQKGTGRARAGS) is disordered. The span at 60-71 (GGRKPWRQKGTG) shows a compositional bias: basic residues.

It belongs to the universal ribosomal protein uL4 family. Part of the 50S ribosomal subunit.

Functionally, one of the primary rRNA binding proteins, this protein initially binds near the 5'-end of the 23S rRNA. It is important during the early stages of 50S assembly. It makes multiple contacts with different domains of the 23S rRNA in the assembled 50S subunit and ribosome. Its function is as follows. Forms part of the polypeptide exit tunnel. The polypeptide is Large ribosomal subunit protein uL4 (Microcystis aeruginosa (strain NIES-843 / IAM M-2473)).